The sequence spans 209 residues: Nucleoside triphosphate pyrophosphatase (209 aa).

Residue aspartate 74 is the Proton acceptor of the active site.

It belongs to the Maf family. Requires a divalent metal cation as cofactor.

It is found in the cytoplasm. It catalyses the reaction a ribonucleoside 5'-triphosphate + H2O = a ribonucleoside 5'-phosphate + diphosphate + H(+). The catalysed reaction is a 2'-deoxyribonucleoside 5'-triphosphate + H2O = a 2'-deoxyribonucleoside 5'-phosphate + diphosphate + H(+). In terms of biological role, nucleoside triphosphate pyrophosphatase. May have a dual role in cell division arrest and in preventing the incorporation of modified nucleotides into cellular nucleic acids. This Neorickettsia sennetsu (strain ATCC VR-367 / Miyayama) (Ehrlichia sennetsu) protein is Nucleoside triphosphate pyrophosphatase.